Consider the following 80-residue polypeptide: U-poneritoxin(01)-Om3a (80 aa).

The N-terminal stretch at 1 to 25 (MKPSGLALAFLVVFMMAIMYNSVQA) is a signal peptide. The propeptide occupies 26–39 (AAIADADAEAEAIA).

The protein belongs to the formicidae venom precursor-01 superfamily. In terms of processing, truncated sequences of this peptide have also been found in the venom. It is possible they have been cleaved in the venom. Expressed by the venom gland.

It localises to the secreted. In terms of biological role, cationic amphipathic alpha-helical peptide with antimicrobial activities against E.coli (MIC=3.1 uM), S.aureus (MIC=25 uM), and S.cerevisiae (MIC=50 uM). Also shows histamine-releasing activity (37.5% at 10 uM). Does not show hemolytic activity, even at 50 uM. The chain is U-poneritoxin(01)-Om3a from Odontomachus monticola (Trap-jaw ant).